We begin with the raw amino-acid sequence, 154 residues long: MAVDPNVKTLVDNRRARFEYDILETYEAGIQLTGTEVKSIRAGKANLQDAFALFRDGEAWLHNLHISPHDTASKVFNHDPTRRRKLLLHRREIDRLRGLVEQKGLTVVPLKLVLNRGWIKAHLGVARGKKLHDKRQAIKERQTQREIQRELKER.

Residues K134–R154 are disordered.

The protein belongs to the SmpB family.

Its subcellular location is the cytoplasm. Its function is as follows. Required for rescue of stalled ribosomes mediated by trans-translation. Binds to transfer-messenger RNA (tmRNA), required for stable association of tmRNA with ribosomes. tmRNA and SmpB together mimic tRNA shape, replacing the anticodon stem-loop with SmpB. tmRNA is encoded by the ssrA gene; the 2 termini fold to resemble tRNA(Ala) and it encodes a 'tag peptide', a short internal open reading frame. During trans-translation Ala-aminoacylated tmRNA acts like a tRNA, entering the A-site of stalled ribosomes, displacing the stalled mRNA. The ribosome then switches to translate the ORF on the tmRNA; the nascent peptide is terminated with the 'tag peptide' encoded by the tmRNA and targeted for degradation. The ribosome is freed to recommence translation, which seems to be the essential function of trans-translation. This Synechococcus sp. (strain JA-2-3B'a(2-13)) (Cyanobacteria bacterium Yellowstone B-Prime) protein is SsrA-binding protein.